Reading from the N-terminus, the 378-residue chain is Stimulator of interferon genes protein (378 aa).

The next 2 helical transmembrane spans lie at 21–41 and 46–66; these read AAFV…EPAD and WLVL…LCSL. Residues Cys-88 and Cys-91 are each lipidated (S-palmitoyl cysteine). Transmembrane regions (helical) follow at residues 89 to 109 and 114 to 134; these read LGCP…YTFL and GLPF…NILL. The tract at residues 153–339 is cyclic dinucleotide-binding domain (CBD); the sequence is FNVAHGLAWS…KHLKQEEKEE (187 aa). Positions 162, 167, 238, and 263 each coordinate 2',3'-cGAMP. 3',3'-c-di-GMP contacts are provided by residues Ser-162, Tyr-167, 238–241, and Thr-263; that span reads RVYT. Residues Tyr-167, Arg-238, and Thr-263 each contribute to the 2',3'-cUAMP site. The C-terminal tail (CTT) stretch occupies residues 339–378; that stretch reads EVTVGTMGSSGVLESSTLDKEPQLLISGMDQPLPLRTDVF. Ser-354 carries the phosphoserine modification. The residue at position 355 (Thr-355) is a Phosphothreonine. Positions 362–365 match the pLxIS motif motif; the sequence is LLIS. Ser-365 bears the Phosphoserine; by TBK1 mark.

It belongs to the STING family. Homodimer; forms a homodimer in absence of cyclic nucleotide (c-di-GMP or cGAMP). Homotetramer; in presence of cyclic nucleotide (c-di-GMP or cGAMP), forms tetramers and higher-order oligomers through side-by-side packing. Interacts (when phosphorylated) with IRF3; following activation and phosphorylation on the pLxIS motif by TBK1, recruits IRF3. Interacts with TBK1; when homodimer, leading to subsequent production of IFN-beta. Phosphorylation by TBK1 leads to activation and production of IFN-beta. Following cyclic nucleotide (c-di-GMP or cGAMP)-binding, activation and translocation from the endoplasmic reticulum, STING1 is phosphorylated by TBK1 at Ser-365 in the pLxIS motif. The phosphorylated pLxIS motif constitutes an IRF3-binding motif, leading to recruitment of the transcription factor IRF3 to induce type-I interferons and other cytokines. In contrast, lacks phosphorylation site at position 357, leading to reduced production of type-I interferons and other cytokines.

It is found in the endoplasmic reticulum membrane. It localises to the cytoplasm. Its subcellular location is the perinuclear region. The protein resides in the endoplasmic reticulum-Golgi intermediate compartment membrane. The protein localises to the golgi apparatus membrane. It is found in the cytoplasmic vesicle. It localises to the autophagosome membrane. Its subcellular location is the mitochondrion outer membrane. The protein resides in the cell membrane. It catalyses the reaction H(+)(in) = H(+)(out). In terms of biological role, facilitator of innate immune signaling that acts as a sensor of cytosolic DNA from bacteria and viruses and promotes low production of type I interferon (IFN-alpha and IFN-beta). Compared to other mammals, STING1-dependent type I interferon induction is strongly reduced in bats, suggesting that the cGAS-STING pathway promotes a limited inflammatory response. Innate immune response is triggered in response to non-CpG double-stranded DNA from viruses and bacteria delivered to the cytoplasm. Acts by binding cyclic dinucleotides: recognizes and binds cyclic di-GMP (c-di-GMP), a second messenger produced by bacteria, cyclic UMP-AMP (2',3'-cUAMP), and cyclic GMP-AMP (cGAMP), a messenger produced by CGAS in response to DNA virus in the cytosol. Upon binding to c-di-GMP, cUAMP or cGAMP, STING1 oligomerizes, translocates from the endoplasmic reticulum and is phosphorylated by TBK1 on the pLxIS motif, leading to recruitment and subsequent activation of the transcription factor IRF3 to induce expression of type I interferon and exert a potent anti-viral state. In addition to promote the production of type I interferons, plays a direct role in autophagy. Following cGAMP-binding, STING1 buds from the endoplasmic reticulum into COPII vesicles, which then form the endoplasmic reticulum-Golgi intermediate compartment (ERGIC). The ERGIC serves as the membrane source for WIPI2 recruitment and LC3 lipidation, leading to formation of autophagosomes that target cytosolic DNA or DNA viruses for degradation by the lysosome. Promotes autophagy by acting as a proton channel that directs proton efflux from the Golgi to facilitate MAP1LC3B/LC3B lipidation. The autophagy- and interferon-inducing activities can be uncoupled and autophagy induction is independent of TBK1 phosphorylation. This chain is Stimulator of interferon genes protein, found in Rhinolophus ferrumequinum (Greater horseshoe bat).